We begin with the raw amino-acid sequence, 332 residues long: Ferredoxin--NADP reductase (332 aa).

FAD contacts are provided by aspartate 33, glutamine 41, tyrosine 46, alanine 86, phenylalanine 120, aspartate 286, and threonine 327.

Belongs to the ferredoxin--NADP reductase type 2 family. Homodimer. FAD serves as cofactor.

It catalyses the reaction 2 reduced [2Fe-2S]-[ferredoxin] + NADP(+) + H(+) = 2 oxidized [2Fe-2S]-[ferredoxin] + NADPH. This Rickettsia bellii (strain OSU 85-389) protein is Ferredoxin--NADP reductase.